Reading from the N-terminus, the 447-residue chain is F-box only protein 5 (447 aa).

Serine 94 and serine 102 each carry phosphoserine. Positions 135-244 (ALETSRLYED…IGRKMGLECV (110 aa)) are interaction with EVI5. The region spanning 250–296 (LFRRGLRHVLATILAQLSDMDLINVSKVSTTWKKILEDDKGAFQLYS) is the F-box domain. The sufficient for interaction with RPS6KA2; Prevents association of CDC20 with RPS6KA2 stretch occupies residues 261–339 (TILAQLSDMD…KSAAQTSLKK (79 aa)). The interval 261-409 (TILAQLSDMD…GCGFDYCTKC (149 aa)) is requires for efficient binding to CDC20. Positions 305–447 (NNNKFSPHAS…KKSKKNLRRL (143 aa)) are inhibits APC ubiquitin ligase activity. The interval 322 to 325 (RTPL) is competitively blocks access of APC substrates to the D-box coreceptor formed by FZR1 and ANAPC10. The tract at residues 337-358 (LKKDAQTKLSNQGDQKGSTYSR) is disordered. The span at 343-357 (TKLSNQGDQKGSTYS) shows a compositional bias: polar residues. The segment at 374–422 (SLKACIRCNSPAKYDCYLQRATCKREGCGFDYCTKCLCNYHTTKDCSDG) adopts a ZBR-type zinc-finger fold. The Zn(2+) site is built by cysteine 378, cysteine 381, cysteine 396, cysteine 401, cysteine 406, cysteine 409, histidine 414, and cysteine 419. The interval 378 to 420 (CIRCNSPAKYDCYLQRATCKREGCGFDYCTKCLCNYHTTKDCS) is allows a rapid multiple mono-ubiquitination of the APC substrate, but strongly inhibits the slow ubiquitin chain elongation catalyzed by UBCH10. The sufficient to suppress UBE2S activity; essential for interaction with UBE2S; competitively inhibits the rapide ubiquitin chain elongation by UBE2D1 which blocks UBE2D1 with APC; indispensable for recruitment and position of FBXO5 to the catalytic site of APC; abrogates the inhibition of ubiquitin chain assembly primarily catalyzed by UBE2S; inhibits the ubiquitination by either UBE2C or UBE2D1 stretch occupies residues 437–447 (TKKSKKNLRRL).

As to quaternary structure, part of a SCF (SKP1-cullin-F-box) protein ligase complex. Interacts with BTRC; mediates proteolysis by the SCF ubiquitin ligase complex leading to activation of APC in late mitosis and subsequent mitotic progression. Interacts with FZR1/CDH1 and the N-terminal substrate-binding domain of CDC20; prevents APC activation. Also interacts with EVI5 which blocks its phosphorylation by PLK1 and prevents its subsequent binding to BTRC and degradation. Interacts simultaneously with anaphase promoting complex (APC), through at least ANAPC2, CDC23, CDC27, the APC substrate GMNN and the APC activator FZR1. Interacts with UBE2S; interferes with the activity of UBE2S mainly by disrupting the dynamic electrostatic association between the C-terminal tail of UBE2S and ANAPC2. Interacts with RPS6KA2; cooperates to induce the metaphase arrest of early blastomeres; increases and stabilizes interaction of FBXO5 with CDC20. In terms of processing, phosphorylation by CDK2 and subsequently by PLK1 triggers degradation during early mitosis through ubiquitin-mediated proteolysis by the SCF ubiquitin ligase complex containing the F-box protein BTRC. This degradation is necessary for the activation of APC in late mitosis and subsequent mitotic progression. Phosphorylated by RPS6KA2; increases and stabilizes interaction with CDC20. Ubiquitinated by the SCF(BTRC) complex following phosphorylation by PLK1. Undergoes both 'Lys-11' and 'Lys-48'-linked polyubiquitination by APC-FZR1 complex leading to degradation by proteasome during G1 phase. Degraded through the SCF(BTRC) complex; degradation occurs during oocyte maturation, between germinal vesicle breakdown (GVBD) and meiosis I, and is required for the meiosis I-meiosis II transition.

It is found in the nucleus. Its subcellular location is the cytoplasm. It localises to the cytoskeleton. The protein localises to the spindle. It functions in the pathway protein modification; protein ubiquitination. Its function is as follows. Regulator of APC activity during mitotic and meiotic cell cycle. During mitotic cell cycle plays a role as both substrate and inhibitor of APC-FZR1 complex. During G1 phase, plays a role as substrate of APC-FZR1 complex E3 ligase. Then switches as an inhibitor of APC-FZR1 complex during S and G2 leading to cell-cycle commitment. As APC inhibitor, prevents the degradation of APC substrates at multiple levels: by interacting with APC and blocking access of APC substrates to the D-box coreceptor, formed by FZR1 and ANAPC10; by suppressing ubiquitin ligation and chain elongation by APC by preventing the UBE2C and UBE2S activities. Plays a role in genome integrity preservation by coordinating DNA replication with mitosis through APC inhibition in interphase to stabilize CCNA2 and GMNN in order to promote mitosis and prevent rereplication and DNA damage-induced cellular senescence. During oocyte maturation, plays a role in meiosis through inactivation of APC-FZR1 complex. Inhibits APC through RPS6KA2 interaction that increases FBXO5 affiniy for CDC20 leading to the metaphase arrest of the second meiotic division before fertilization. Controls entry into the first meiotic division through inactivation of APC-FZR1 complex. Promotes migration and osteogenic differentiation of mesenchymal stem cells. This chain is F-box only protein 5, found in Homo sapiens (Human).